The chain runs to 80 residues: Bowman-Birk type proteinase inhibitor (80 aa).

Disulfide bonds link C19-C70, C20-C35, C23-C66, C25-C33, C41-C47, C44-C59, and C49-C57.

In terms of assembly, occurs as a monomer, dimer or trimer. The dimer may be the active form. Post-translationally, binds calcium, probably through His-3 to His-6.

Functionally, protease inhibitor with activity against cysteine, aspartic and serine proteases. Highest activity against serine proteases, in particular trypsin and trypsin-like proteases. The sequence is that of Bowman-Birk type proteinase inhibitor from Phaseolus acutifolius (Tepary bean).